A 335-amino-acid polypeptide reads, in one-letter code: Phosphatidylcholine-sterol acyltransferase (335 aa).

An N-terminal signal peptide occupies residues 1-18 (MKKWFVCLLGLVALTVQA). Serine 34 acts as the Nucleophile in catalysis. Active-site residues include aspartate 306 and histidine 309.

It belongs to the 'GDSL' lipolytic enzyme family.

The enzyme catalyses a sterol + a 1,2-diacyl-sn-glycero-3-phosphocholine = a sterol ester + a 1-acyl-sn-glycero-3-phosphocholine. In terms of biological role, fatty acid transfer between phosphatidylcholine and cholesterol. The chain is Phosphatidylcholine-sterol acyltransferase from Aeromonas hydrophila.